Here is a 272-residue protein sequence, read N- to C-terminus: Octanoyltransferase (272 aa).

A compositionally biased stretch (polar residues) spans 1-12 (MQQDPPTSQPHT). A disordered region spans residues 1–20 (MQQDPPTSQPHTPQIVDGVK). Residues 65–255 (HQRPNTVIYV…EMMSFQPYEM (191 aa)) enclose the BPL/LPL catalytic domain. Residues 103–110 (RGGEITWH), 175–177 (AIG), and 188–190 (GFA) contribute to the substrate site. Cys-206 serves as the catalytic Acyl-thioester intermediate.

The protein belongs to the LipB family.

Its subcellular location is the cytoplasm. It catalyses the reaction octanoyl-[ACP] + L-lysyl-[protein] = N(6)-octanoyl-L-lysyl-[protein] + holo-[ACP] + H(+). Its pathway is protein modification; protein lipoylation via endogenous pathway; protein N(6)-(lipoyl)lysine from octanoyl-[acyl-carrier-protein]: step 1/2. Functionally, catalyzes the transfer of endogenously produced octanoic acid from octanoyl-acyl-carrier-protein onto the lipoyl domains of lipoate-dependent enzymes. Lipoyl-ACP can also act as a substrate although octanoyl-ACP is likely to be the physiological substrate. The protein is Octanoyltransferase of Cutibacterium acnes (strain DSM 16379 / KPA171202) (Propionibacterium acnes).